The chain runs to 102 residues: Small ribosomal subunit protein uS10 (102 aa).

The protein belongs to the universal ribosomal protein uS10 family. Part of the 30S ribosomal subunit.

Its function is as follows. Involved in the binding of tRNA to the ribosomes. This is Small ribosomal subunit protein uS10 from Heliobacterium modesticaldum (strain ATCC 51547 / Ice1).